Here is a 369-residue protein sequence, read N- to C-terminus: Tyrosine-protein phosphatase non-receptor type 5 (369 aa).

Phosphoserine; by PKA is present on Ser-49. A Phosphothreonine; by MAPK modification is found at Thr-59. A Phosphoserine; by MAPK modification is found at Ser-72. The region spanning Leu-104–Tyr-359 is the Tyrosine-protein phosphatase domain. Substrate-binding positions include Asp-265, Cys-300–Arg-306, and Gln-344. The active-site Phosphocysteine intermediate is Cys-300.

This sequence belongs to the protein-tyrosine phosphatase family. Non-receptor class subfamily. Phosphorylation at Ser-49 by PKA deactivates PTPN5. Phosphorylation at Thr-59 and Ser-72 by MAPKs stabilizes the phosphatase, dephosphorylation of these sites results in ubiquitin-mediated degradation of the active phosphatase. As to expression, expressed in the central nervous system except in the cerebellum. Enriched within the striatum relative to other brain areas.

The protein resides in the cytoplasm. The enzyme catalyses O-phospho-L-tyrosyl-[protein] + H2O = L-tyrosyl-[protein] + phosphate. In terms of biological role, may regulate the activity of several effector molecules involved in synaptic plasticity and neuronal cell survival, including MAPKs, Src family kinases and NMDA receptors. The protein is Tyrosine-protein phosphatase non-receptor type 5 (Ptpn5) of Rattus norvegicus (Rat).